Reading from the N-terminus, the 58-residue chain is UPF0391 membrane protein Gbem_0127 (58 aa).

Transmembrane regions (helical) follow at residues 4–24 (WALIFFIIAIIAAVFGFGGIA) and 33–53 (ILFYLFLVVAVVMLVSALLAG).

This sequence belongs to the UPF0391 family.

The protein localises to the cell membrane. The sequence is that of UPF0391 membrane protein Gbem_0127 from Citrifermentans bemidjiense (strain ATCC BAA-1014 / DSM 16622 / JCM 12645 / Bem) (Geobacter bemidjiensis).